Reading from the N-terminus, the 142-residue chain is Large ribosomal subunit protein uL11 (142 aa).

It belongs to the universal ribosomal protein uL11 family. As to quaternary structure, part of the ribosomal stalk of the 50S ribosomal subunit. Interacts with L10 and the large rRNA to form the base of the stalk. L10 forms an elongated spine to which L12 dimers bind in a sequential fashion forming a multimeric L10(L12)X complex. In terms of processing, one or more lysine residues are methylated.

Its function is as follows. Forms part of the ribosomal stalk which helps the ribosome interact with GTP-bound translation factors. The chain is Large ribosomal subunit protein uL11 from Shewanella sediminis (strain HAW-EB3).